A 422-amino-acid chain; its full sequence is Histidine--tRNA ligase (422 aa).

This sequence belongs to the class-II aminoacyl-tRNA synthetase family. In terms of assembly, homodimer.

The protein localises to the cytoplasm. It carries out the reaction tRNA(His) + L-histidine + ATP = L-histidyl-tRNA(His) + AMP + diphosphate + H(+). This is Histidine--tRNA ligase (hisS) from Photobacterium profundum (strain SS9).